Here is a 304-residue protein sequence, read N- to C-terminus: Aspartate carbamoyltransferase catalytic subunit (304 aa).

Residues Arg-53 and Thr-54 each contribute to the carbamoyl phosphate site. Lys-82 contacts L-aspartate. Positions 103, 131, and 134 each coordinate carbamoyl phosphate. Residues Arg-163 and Arg-224 each coordinate L-aspartate. Residues Leu-263 and Pro-264 each coordinate carbamoyl phosphate.

Belongs to the aspartate/ornithine carbamoyltransferase superfamily. ATCase family. As to quaternary structure, heterooligomer of catalytic and regulatory chains.

It carries out the reaction carbamoyl phosphate + L-aspartate = N-carbamoyl-L-aspartate + phosphate + H(+). It participates in pyrimidine metabolism; UMP biosynthesis via de novo pathway; (S)-dihydroorotate from bicarbonate: step 2/3. Its function is as follows. Catalyzes the condensation of carbamoyl phosphate and aspartate to form carbamoyl aspartate and inorganic phosphate, the committed step in the de novo pyrimidine nucleotide biosynthesis pathway. In Haloquadratum walsbyi (strain DSM 16790 / HBSQ001), this protein is Aspartate carbamoyltransferase catalytic subunit.